A 128-amino-acid polypeptide reads, in one-letter code: UPF0102 protein MAV_3752 (128 aa).

The protein belongs to the UPF0102 family.

This is UPF0102 protein MAV_3752 from Mycobacterium avium (strain 104).